A 452-amino-acid polypeptide reads, in one-letter code: Ribosomal protein uS12 methylthiotransferase RimO (452 aa).

In terms of domain architecture, MTTase N-terminal spans 3–118 (GKIGFVSLGC…VMQVIHLHLP (116 aa)). [4Fe-4S] cluster-binding residues include cysteine 12, cysteine 48, cysteine 77, cysteine 149, cysteine 153, and cysteine 156. A Radical SAM core domain is found at 135–382 (LTPKHYAYLK…AKAEEISVGR (248 aa)). In terms of domain architecture, TRAM spans 384–452 (AKKIGKRLQV…SQGHDLIAET (69 aa)).

This sequence belongs to the methylthiotransferase family. RimO subfamily. The cofactor is [4Fe-4S] cluster.

Its subcellular location is the cytoplasm. The catalysed reaction is L-aspartate(89)-[ribosomal protein uS12]-hydrogen + (sulfur carrier)-SH + AH2 + 2 S-adenosyl-L-methionine = 3-methylsulfanyl-L-aspartate(89)-[ribosomal protein uS12]-hydrogen + (sulfur carrier)-H + 5'-deoxyadenosine + L-methionine + A + S-adenosyl-L-homocysteine + 2 H(+). In terms of biological role, catalyzes the methylthiolation of an aspartic acid residue of ribosomal protein uS12. The polypeptide is Ribosomal protein uS12 methylthiotransferase RimO (Polynucleobacter necessarius subsp. necessarius (strain STIR1)).